A 210-amino-acid chain; its full sequence is V-type sodium ATPase subunit D (210 aa).

Belongs to the V-ATPase D subunit family.

Its function is as follows. Involved in ATP-driven sodium extrusion. This chain is V-type sodium ATPase subunit D (ntpD), found in Enterococcus hirae (strain ATCC 9790 / DSM 20160 / JCM 8729 / LMG 6399 / NBRC 3181 / NCIMB 6459 / NCDO 1258 / NCTC 12367 / WDCM 00089 / R).